A 245-amino-acid polypeptide reads, in one-letter code: E3 ubiquitin-protein ligase RNF138 (245 aa).

The RING-type zinc-finger motif lies at 18-58; that stretch reads CPVCQEVLKTPVRTAACQHVFCRKCFLTAMRESGIHCPLCR. Zn(2+) contacts are provided by Cys86, Cys89, His101, and Cys105. The C2HC RNF-type zinc-finger motif lies at 86–105; sequence CRCCSKKIKFYRMRHHYKSC. A disordered region spans residues 128–154; that stretch reads VRSSNRSETSASDNTETYQEDTSSSGH. The residue at position 142 (Thr142) is a Phosphothreonine. 2 C2H2-type zinc fingers span residues 157 to 180 and 187 to 215; these read FKCP…NSNH and VTCP…NQRH. In terms of domain architecture, UIM spans 225–243; the sequence is LQLDEETQYQTAVEESFQV.

Interacts with NLK. Interacts with XRCC5/Ku80. Interacts with RBBP8/CtIP. Post-translationally, auto-ubiquitinated.

It localises to the chromosome. The enzyme catalyses S-ubiquitinyl-[E2 ubiquitin-conjugating enzyme]-L-cysteine + [acceptor protein]-L-lysine = [E2 ubiquitin-conjugating enzyme]-L-cysteine + N(6)-ubiquitinyl-[acceptor protein]-L-lysine.. The protein operates within protein modification; protein ubiquitination. In terms of biological role, E3 ubiquitin-protein ligase involved in DNA damage response by promoting DNA resection and homologous recombination. Recruited to sites of double-strand breaks following DNA damage and specifically promotes double-strand break repair via homologous recombination. Two different, non-exclusive, mechanisms have been proposed. According to a report, regulates the choice of double-strand break repair by favoring homologous recombination over non-homologous end joining (NHEJ): acts by mediating ubiquitination of XRCC5/Ku80, leading to remove the Ku complex from DNA breaks, thereby promoting homologous recombination. According to another report, cooperates with UBE2Ds E2 ubiquitin ligases (UBE2D1, UBE2D2, UBE2D3 or UBE2D4) to promote homologous recombination by mediating ubiquitination of RBBP8/CtIP. Together with NLK, involved in the ubiquitination and degradation of TCF/LEF. Also exhibits auto-ubiquitination activity in combination with UBE2K. May act as a negative regulator in the Wnt/beta-catenin-mediated signaling pathway. This Mus musculus (Mouse) protein is E3 ubiquitin-protein ligase RNF138.